Consider the following 225-residue polypeptide: Ferric nitrobindin-like protein (225 aa).

A GXWXGXG motif is present at residues 78–84 (GVWRGTG).

Belongs to the nitrobindin family.

The chain is Ferric nitrobindin-like protein from Corynebacterium diphtheriae (strain ATCC 700971 / NCTC 13129 / Biotype gravis).